A 54-amino-acid chain; its full sequence is Soricidin (54 aa).

3 cysteine pairs are disulfide-bonded: cysteine 2/cysteine 23, cysteine 6/cysteine 27, and cysteine 9/cysteine 41.

It belongs to the opioid neuropeptide precursor family. As to quaternary structure, member of a multiprotein complex. Salivary gland.

It localises to the secreted. Its function is as follows. Paralytic toxin that immobilizes a mealworm for 7 days. Inhibits the transient receptor potential cation channel subfamily V member 6 (TRPV6). The polypeptide is Soricidin (Blarina brevicauda (Northern short-tailed shrew)).